The chain runs to 519 residues: Cytosol aminopeptidase (519 aa).

The residue at position 42 (S42) is a Phosphoserine. K45 bears the N6-succinyllysine mark. At S54 the chain carries Phosphoserine. N6-succinyllysine occurs at positions 61 and 103. Residues S180 and S194 each carry the phosphoserine modification. Residues L202, M203, and T205 each coordinate Zn(2+). At K221 the chain carries N6-acetyllysine; alternate. Residue K221 is modified to N6-succinyllysine; alternate. The residue at position 238 (S238) is a Phosphoserine. Positions 282 and 287 each coordinate Zn(2+). Substrate is bound by residues K282, D287, S292, and K294. Residue D287 participates in Mg(2+) binding. K294 is an active-site residue. Positions 303, 305, 364, and 366 each coordinate Zn(2+). 2 residues coordinate substrate: D305 and D364. Positions 364 and 366 each coordinate Mg(2+). R368 is a catalytic residue. The residue at position 455 (K455) is an N6-acetyllysine; alternate. At K455 the chain carries N6-succinyllysine; alternate. K476 bears the N6-succinyllysine mark. N6-acetyllysine; alternate is present on K489. At K489 the chain carries N6-succinyllysine; alternate.

Belongs to the peptidase M17 family. Homohexamer. The cofactor is Zn(2+). Mn(2+) serves as cofactor.

The protein resides in the cytoplasm. The catalysed reaction is Release of an N-terminal amino acid, Xaa-|-Yaa-, in which Xaa is preferably Leu, but may be other amino acids including Pro although not Arg or Lys, and Yaa may be Pro. Amino acid amides and methyl esters are also readily hydrolyzed, but rates on arylamides are exceedingly low.. The enzyme catalyses an S-substituted L-cysteinylglycine + H2O = an S-substituted L-cysteine + glycine. It catalyses the reaction L-cysteinylglycine + H2O = L-cysteine + glycine. It carries out the reaction S-benzyl-L-cysteinylglycine + H2O = S-benzyl-L-cysteine + glycine. The catalysed reaction is Release of N-terminal proline from a peptide.. In terms of biological role, cytosolic metallopeptidase that catalyzes the removal of unsubstituted N-terminal hydrophobic amino acids from various peptides. The presence of Zn(2+) ions is essential for the peptidase activity, and the association with other cofactors can modulate the substrate spectificity of the enzyme. For instance, in the presence of Mn(2+), it displays a specific Cys-Gly hydrolyzing activity of Cys-Gly-S-conjugates. Involved in the metabolism of glutathione and in the degradation of glutathione S-conjugates, which may play a role in the control of the cell redox status. This chain is Cytosol aminopeptidase, found in Sus scrofa (Pig).